Reading from the N-terminus, the 262-residue chain is Transmembrane and immunoglobulin domain-containing protein 1 (262 aa).

A signal peptide spans 1 to 29 (MAWKSSVIMQMGRFLLLVILFLPREMTSS). The region spanning 30-114 (VLTVNGKTEN…LGRDQSVSVS (85 aa)) is the Ig-like C2-type 1 domain. At 30–220 (VLTVNGKTEN…IVKDKTVGVP (191 aa)) the chain is on the extracellular side. The cysteines at positions 54 and 103 are disulfide-linked. N-linked (GlcNAc...) asparagine glycosylation is found at Asn-58, Asn-83, Asn-118, Asn-158, and Asn-190. One can recognise an Ig-like C2-type 2 domain in the interval 122–207 (PPLLSGNDFQ…KSSLKTESLD (86 aa)). Cys-143 and Cys-195 form a disulfide bridge. Residues 221–241 (IEPIIAACVVIFLTLCFGLIA) traverse the membrane as a helical segment. Residues 242 to 262 (RRKKIMKLCMKDKDPHSETAL) are Cytoplasmic-facing.

Homodimer. In terms of processing, N-glycosylated.

The protein localises to the cell membrane. Its subcellular location is the cytoplasm. Functionally, may control cell-cell adhesion, cell migration and proliferation, cell morphology, and protects renal epithelial cells from oxidative cell injury to promote cell survival. The chain is Transmembrane and immunoglobulin domain-containing protein 1 from Homo sapiens (Human).